Reading from the N-terminus, the 180-residue chain is Stathmin-3 (180 aa).

In terms of domain architecture, SLD spans 38–180; sequence GDMEVKQLDK…NKEQREEISG (143 aa). Residues 60-74 show a composition bias toward low complexity; sequence SPSDLSPESPILSSP. The disordered stretch occupies residues 60-82; sequence SPSDLSPESPILSSPPKKKDLSL. The stretch at 75 to 179 forms a coiled coil; the sequence is PKKKDLSLEE…RNKEQREEIS (105 aa).

This sequence belongs to the stathmin family.

The chain is Stathmin-3 (STMN3) from Gallus gallus (Chicken).